The sequence spans 221 residues: Small ribosomal subunit protein uS2 (221 aa).

The protein belongs to the universal ribosomal protein uS2 family.

The polypeptide is Small ribosomal subunit protein uS2 (Methanococcus maripaludis (strain C6 / ATCC BAA-1332)).